A 218-amino-acid chain; its full sequence is Kappa-scoloptoxin(11)-Ssd1b (218 aa).

The signal sequence occupies residues 1–16 (MFYSHLLFFTFTFACS). The propeptide occupies 17–25 (SSLNRKTKR).

Post-translationally, contains 8 disulfide bonds. In terms of tissue distribution, expressed by the venom gland.

The protein localises to the secreted. Functionally, voltage-gated potassium channel inhibitor. The chain is Kappa-scoloptoxin(11)-Ssd1b from Scolopendra dehaani (Thai centipede).